The primary structure comprises 312 residues: Pre-mRNA-splicing factor 38A (312 aa).

An N-terminal protein interaction domain region spans residues Met-1–Pro-179. Residues Arg-180–Glu-312 are disordered. Positions Leu-184–Asp-201 are enriched in acidic residues. Residues Glu-202–Arg-223 are compositionally biased toward basic and acidic residues. Composition is skewed to basic residues over residues Arg-224–Ser-294 and Lys-301–Glu-312.

The protein belongs to the PRP38 family. In terms of assembly, component of the spliceosome B complex.

Its subcellular location is the nucleus. Involved in pre-mRNA splicing as a component of the spliceosome. This Xenopus laevis (African clawed frog) protein is Pre-mRNA-splicing factor 38A (prpf38a).